We begin with the raw amino-acid sequence, 611 residues long: Protein spaetzle 3 (611 aa).

Residues 1–14 form the signal peptide; that stretch reads MALTNFSLPFGALG. A glycan (N-linked (GlcNAc...) asparagine) is linked at Asn5. The tract at residues 57 to 322 is disordered; sequence EYFKNNPYAP…NDKSNNNQMP (266 aa). Low complexity-rich tracts occupy residues 104 to 120, 127 to 153, and 169 to 185; these read QQVQ…QHQQ, SVSF…LTQT, and PGQQ…QQKQ. A compositionally biased stretch (polar residues) spans 191–210; the sequence is GSASATFTKNSGSFSITSFG. A compositionally biased stretch (pro residues) spans 218-239; sequence PPQPQQPPPSQQQQPPPAPPPQ. Over residues 288–306 the composition is skewed to acidic residues; that stretch reads YDVEEGEEDEEEDGEEEGQ. Residues Asn335 and Asn351 are each glycosylated (N-linked (GlcNAc...) asparagine). A disordered region spans residues 477–518; it reads KKRQAAAGGSRNRGGSAGGSGNGNTNANRQPGNKNGSSGTGR. Positions 487–498 are enriched in gly residues; sequence RNRGGSAGGSGN. Asn511 carries N-linked (GlcNAc...) asparagine glycosylation. A Spaetzle domain is found at 521-609; it reads ACESKIEIVT…LFPSCCVCRC (89 aa). 3 disulfides stabilise this stretch: Cys522/Cys573, Cys559/Cys605, and Cys567/Cys607.

Homodimer; disulfide-linked.

Functionally, neurotrophin which may function as a ligand to the Toll-related receptor Tollo. Involved in a Tollo and JNK signaling pathway that positively regulates neuromuscular junction (NMJ) growth in presynaptic motorneurons. May function by activating Tollo to promote the phosphorylation of JNK. In Drosophila melanogaster (Fruit fly), this protein is Protein spaetzle 3.